Consider the following 876-residue polypeptide: Alanine--tRNA ligase (876 aa).

4 residues coordinate Zn(2+): His-560, His-564, Cys-662, and His-666.

This sequence belongs to the class-II aminoacyl-tRNA synthetase family. Zn(2+) is required as a cofactor.

The protein resides in the cytoplasm. It catalyses the reaction tRNA(Ala) + L-alanine + ATP = L-alanyl-tRNA(Ala) + AMP + diphosphate. Its function is as follows. Catalyzes the attachment of alanine to tRNA(Ala) in a two-step reaction: alanine is first activated by ATP to form Ala-AMP and then transferred to the acceptor end of tRNA(Ala). Also edits incorrectly charged Ser-tRNA(Ala) and Gly-tRNA(Ala) via its editing domain. This chain is Alanine--tRNA ligase, found in Synechococcus elongatus (strain ATCC 33912 / PCC 7942 / FACHB-805) (Anacystis nidulans R2).